A 208-amino-acid polypeptide reads, in one-letter code: Redox-sensing transcriptional repressor Rex (208 aa).

Positions 15-54 (SYYMCLERLLDEGVEVVSSEELARRLDLKASQIRKDLSYF) form a DNA-binding region, H-T-H motif. 89–94 (GAGNIG) contributes to the NAD(+) binding site.

This sequence belongs to the transcriptional regulatory Rex family. In terms of assembly, homodimer.

The protein resides in the cytoplasm. Modulates transcription in response to changes in cellular NADH/NAD(+) redox state. In Thermotoga petrophila (strain ATCC BAA-488 / DSM 13995 / JCM 10881 / RKU-1), this protein is Redox-sensing transcriptional repressor Rex.